We begin with the raw amino-acid sequence, 415 residues long: Phosphoribosylamine--glycine ligase (415 aa).

The region spanning 108–311 is the ATP-grasp domain; it reads KKIMEKYNIP…LMQHIIDLDE (204 aa). 134 to 191 serves as a coordination point for ATP; it reads IENCELPVVVKKDGLAAGKGVIIADTIEAARSAIEIMYGDEEEGTVVFETFLEGEEFS. Residues E281 and N283 each coordinate Mg(2+).

Belongs to the GARS family. Mg(2+) is required as a cofactor. Requires Mn(2+) as cofactor.

The enzyme catalyses 5-phospho-beta-D-ribosylamine + glycine + ATP = N(1)-(5-phospho-beta-D-ribosyl)glycinamide + ADP + phosphate + H(+). The protein operates within purine metabolism; IMP biosynthesis via de novo pathway; N(1)-(5-phospho-D-ribosyl)glycinamide from 5-phospho-alpha-D-ribose 1-diphosphate: step 2/2. The polypeptide is Phosphoribosylamine--glycine ligase (Staphylococcus aureus (strain MW2)).